The sequence spans 309 residues: Foldase protein PrsA 2 (309 aa).

A signal peptide spans 1 to 22 (MKQMNKLITGVVTLATVVTLSA). A lipid anchor (N-palmitoyl cysteine) is attached at C23. C23 is lipidated: S-diacylglycerol cysteine. Residues 146-241 (TPTMTAEIMQ…RTYHIIKVTK (96 aa)) enclose the PpiC domain.

The protein belongs to the PrsA family.

It localises to the cell membrane. It carries out the reaction [protein]-peptidylproline (omega=180) = [protein]-peptidylproline (omega=0). Its function is as follows. Plays a major role in protein secretion by helping the post-translocational extracellular folding of several secreted proteins. In Streptococcus pyogenes serotype M1, this protein is Foldase protein PrsA 2 (prsA2).